A 353-amino-acid chain; its full sequence is Nif-specific regulatory protein (353 aa).

The Sigma-54 factor interaction domain maps to 12 to 240 (IVGESAALKE…LQNCTQRTAT (229 aa)). ATP-binding positions include 40 to 47 (GESGTGKE) and 103 to 112 (AHGGTLLLDE). Residues 325-344 (QAKAARLLGRTPRQVGYSLR) constitute a DNA-binding region (H-T-H motif).

As to quaternary structure, interacts with sigma-54.

Its function is as follows. Required for activation of most nif operons, which are directly involved in nitrogen fixation. The sequence is that of Nif-specific regulatory protein (nifA) from Rhizobium leguminosarum bv. trifolii.